Reading from the N-terminus, the 681-residue chain is uncharacterized protein (681 aa).

The protein in the N-terminal section; belongs to the purine/pyrimidine phosphoribosyltransferase family.

This is an uncharacterized protein from Mycobacterium tuberculosis (strain CDC 1551 / Oshkosh).